A 347-amino-acid chain; its full sequence is Protein-glutamate methylesterase/protein-glutamine glutaminase 3 (347 aa).

Positions 3–120 constitute a Response regulatory domain; that stretch reads QVFIVDDSAV…KNFLEESEIL (118 aa). The residue at position 54 (D54) is a 4-aspartylphosphate. Residues 159 to 347 enclose the CheB-type methylesterase domain; sequence IDTTDKLIAI…SKIVGEVQYF (189 aa). Catalysis depends on residues S171, H197, and D293.

This sequence belongs to the CheB family. Post-translationally, phosphorylated by CheA. Phosphorylation of the N-terminal regulatory domain activates the methylesterase activity.

The protein localises to the cytoplasm. The enzyme catalyses [protein]-L-glutamate 5-O-methyl ester + H2O = L-glutamyl-[protein] + methanol + H(+). It carries out the reaction L-glutaminyl-[protein] + H2O = L-glutamyl-[protein] + NH4(+). Its function is as follows. Involved in chemotaxis. Part of a chemotaxis signal transduction system that modulates chemotaxis in response to various stimuli. Catalyzes the demethylation of specific methylglutamate residues introduced into the chemoreceptors (methyl-accepting chemotaxis proteins or MCP) by CheR. Also mediates the irreversible deamidation of specific glutamine residues to glutamic acid. This Leptospira interrogans serogroup Icterohaemorrhagiae serovar copenhageni (strain Fiocruz L1-130) protein is Protein-glutamate methylesterase/protein-glutamine glutaminase 3.